A 375-amino-acid chain; its full sequence is DNA replication and repair protein RecF (375 aa).

30-37 (GENAQGKT) is an ATP binding site.

It belongs to the RecF family.

Its subcellular location is the cytoplasm. In terms of biological role, the RecF protein is involved in DNA metabolism; it is required for DNA replication and normal SOS inducibility. RecF binds preferentially to single-stranded, linear DNA. It also seems to bind ATP. The sequence is that of DNA replication and repair protein RecF from Enterococcus faecalis (strain ATCC 700802 / V583).